The primary structure comprises 359 residues: Probable 2-oxoacid dependent dioxygenase (359 aa).

A Fe2OG dioxygenase domain is found at 207–308; the sequence is KGLWMLCHCF…ISVACFFVHT (102 aa). Fe cation is bound by residues histidine 231, aspartate 233, and histidine 287. A disordered region spans residues 329–359; sequence PPKYRDTTSESSNHYVARKPNGNSSLDHLRI. Residues 349–359 show a composition bias toward polar residues; the sequence is NGNSSLDHLRI.

This sequence belongs to the iron/ascorbate-dependent oxidoreductase family. Fe(2+) serves as cofactor. In terms of tissue distribution, expressed in leaves and seeds. All cultivars with seed-only-functional allele have low to non-detectable GSL-OH expression in the leaves.

The catalysed reaction is gluconapin + AH2 + O2 = progoitrin + A + H2O. In terms of biological role, necessary for the hydroxylation of but-3-enyl glucosinolate to 2-hydroxybut-3-enyl glucosinolate, which is toxic to insects, bacteria and nematodes, inhibits seed germination and produces bitter flavors. The sequence is that of Probable 2-oxoacid dependent dioxygenase from Arabidopsis thaliana (Mouse-ear cress).